A 212-amino-acid polypeptide reads, in one-letter code: MIAARFTNSKQLISQLNCALSPADALCAIAAISDSETTEVAVISALLQLLSRHHHHSSVATAAVEVLVKLAPASVEPLLAAFRSCSDQGFQAWIIQALAMIGDAKAFDLLAEVVGTEVANHCQGNVRRIAARGLGKIGSTVKDREVTDRAIEKLHWALVTPQDWGLRYAAVVSLQEIATPQAHAVLSAAVAGESDWVVRSRMKKALEQIPAC.

The protein belongs to the CpcE/RpcE/PecE family.

Functionally, an enzyme involved in the biosynthesis of bilin. The protein is Bilin biosynthesis protein PecF (pecF) of Mastigocladus laminosus (Fischerella sp.).